A 342-amino-acid polypeptide reads, in one-letter code: Isopentenyl-diphosphate delta-isomerase (342 aa).

A substrate-binding site is contributed by 11–12; sequence RK. Residues serine 68, 69-71, serine 99, and asparagine 127 each bind FMN; that span reads SMT. Residue 99-101 coordinates substrate; the sequence is SMR. Glutamine 162 provides a ligand contact to substrate. Residue glutamate 163 participates in Mg(2+) binding. FMN is bound by residues lysine 194, threonine 224, 274–276, and 295–296; these read GFK and AG.

This sequence belongs to the IPP isomerase type 2 family. As to quaternary structure, homooctamer. Dimer of tetramers. It depends on FMN as a cofactor. The cofactor is NADPH. Mg(2+) is required as a cofactor.

The protein localises to the cytoplasm. It carries out the reaction isopentenyl diphosphate = dimethylallyl diphosphate. Its function is as follows. Involved in the biosynthesis of isoprenoids. Catalyzes the 1,3-allylic rearrangement of the homoallylic substrate isopentenyl (IPP) to its allylic isomer, dimethylallyl diphosphate (DMAPP). The polypeptide is Isopentenyl-diphosphate delta-isomerase (Rickettsia conorii (strain ATCC VR-613 / Malish 7)).